The following is a 225-amino-acid chain: MAITDWPENERPREKLLTRGTAALSDAELLALFLRVGMRGKSAVDLARDLLQQFGSLTRLCAASAAEFSAIPGMGLAKYAQLQAVMELARRALAEQMNDADVFESPLAVRNWLRLRIGSLPHEVFHVLLLDARNRLIEAVELFRGTLTQTSVYPREVVKLALARNAAAVILAHNHPSGAAEPSPADELLTRSLKQALELVDIRVLDHFIVTAHAQPLSFAERGLL.

In terms of domain architecture, MPN spans 102-225; sequence VFESPLAVRN…PLSFAERGLL (124 aa). Zn(2+) is bound by residues histidine 173, histidine 175, and aspartate 186. Residues 173–186 carry the JAMM motif motif; it reads HNHPSGAAEPSPAD.

It belongs to the UPF0758 family.

The protein is UPF0758 protein AZOSEA04420 of Aromatoleum aromaticum (strain DSM 19018 / LMG 30748 / EbN1) (Azoarcus sp. (strain EbN1)).